A 373-amino-acid polypeptide reads, in one-letter code: Peroxisomal biogenesis factor 3 (373 aa).

At 1–15 (MLRSMWNFLKRHKKK) the chain is on the cytoplasmic side. The segment at 1–45 (MLRSMWNFLKRHKKKCIFLGTVLGGVYILGKYGQKKIREIQEREA) is targeting to peroxisomes. A helical membrane pass occupies residues 16-36 (CIFLGTVLGGVYILGKYGQKK). The Peroxisomal portion of the chain corresponds to 37 to 116 (IREIQEREAA…LKIISFTRSI (80 aa)). Residues 117–140 (VAVYSTCMLVVLLRVQLNIIGGYI) traverse the membrane as a helical segment. The interaction with PEX19 stretch occupies residues 120–136 (YSTCMLVVLLRVQLNII). The Cytoplasmic segment spans residues 141–373 (YLDNATVGKN…AFSTPQQLEK (233 aa)).

This sequence belongs to the peroxin-3 family. Interacts with PEX19.

The protein resides in the peroxisome membrane. Its function is as follows. Involved in peroxisome biosynthesis and integrity. Assembles membrane vesicles before the matrix proteins are translocated. As a docking factor for PEX19, is necessary for the import of peroxisomal membrane proteins in the peroxisomes. The protein is Peroxisomal biogenesis factor 3 (PEX3) of Cricetulus longicaudatus (Long-tailed dwarf hamster).